The primary structure comprises 670 residues: Beta-fructofuranosidase 1 (670 aa).

Positions 1-40 (MIPAVADPTTLDGGGARRPLLPETDPRGRAAAGAEQKRPP) are disordered. The Cytoplasmic portion of the chain corresponds to 1-44 (MIPAVADPTTLDGGGARRPLLPETDPRGRAAAGAEQKRPPATPT). The propeptide at 1 to 112 (MIPAVADPTT…APLLGSGALQ (112 aa)) is removed in mature form. A helical; Signal-anchor for type II membrane protein transmembrane segment spans residues 45 to 65 (VLTAVVSAVLLLVLVAVTVLA). Residues 66–670 (SQHVDGQAGG…RPYPATTTSL (605 aa)) are Lumenal-facing. Substrate-binding positions include 136 to 139 (WMND), Q155, and W163. Residue D139 is part of the active site. N165 is a glycosylation site (N-linked (GlcNAc...) asparagine). Substrate contacts are provided by residues 198–199 (WS) and 263–264 (RD). N-linked (GlcNAc...) asparagine glycosylation occurs at N275. Residues E322 and D362 each coordinate substrate. The N-linked (GlcNAc...) asparagine glycan is linked to N518. A disulfide bridge connects residues C519 and C567. N-linked (GlcNAc...) asparagine glycans are attached at residues N595 and N639.

This sequence belongs to the glycosyl hydrolase 32 family. In terms of assembly, may be present in two forms, a 70 kDa monomer and a heterodimer of the 30 kDa and 38 kDa subunits. The ratio of the levels of the two forms within cells appears to be regulated developmentally.

The protein resides in the membrane. It localises to the vacuole lumen. It catalyses the reaction Hydrolysis of terminal non-reducing beta-D-fructofuranoside residues in beta-D-fructofuranosides.. Its pathway is glycan biosynthesis; sucrose metabolism. This chain is Beta-fructofuranosidase 1 (IVR1), found in Zea mays (Maize).